A 256-amino-acid polypeptide reads, in one-letter code: DNA repair protein RecO (256 aa).

It belongs to the RecO family.

Functionally, involved in DNA repair and RecF pathway recombination. The polypeptide is DNA repair protein RecO (Nocardia farcinica (strain IFM 10152)).